We begin with the raw amino-acid sequence, 225 residues long: UPF0700 transmembrane protein YoaK (225 aa).

The next 6 membrane-spanning stretches (helical) occupy residues 10-30 (LLSLLCLTAGIVDVIGYLSLG), 56-76 (VFNSLTALIGFICGVIIATLM), 99-119 (ILFVFACLSFYRAFVPVHILI), 137-157 (GIAGISSTVLTGTLASLLEDI), 174-194 (TVLRALAIILYCVGAIIVALA), and 197-217 (DFYHFIIWVPIVLIFGIMMTA).

Belongs to the UPF0700 family.

Its subcellular location is the cell membrane. In Bacillus subtilis (strain 168), this protein is UPF0700 transmembrane protein YoaK (yoaK).